Here is a 950-residue protein sequence, read N- to C-terminus: Coatomer subunit beta-2 (950 aa).

HEAT repeat units lie at residues 92–126 (PEMI…LSEP), 127–164 (EVLE…LPHG), 275–312 (TAVR…TSHR), 313–350 (DVMV…ARNV), and 392–429 (EVAG…TNPK).

Oligomeric complex that consists of at least the alpha, beta, beta', gamma, delta, epsilon and zeta subunits.

It localises to the cytoplasm. The protein resides in the golgi apparatus membrane. The protein localises to the cytoplasmic vesicle. Its subcellular location is the COPI-coated vesicle membrane. Its function is as follows. The coatomer is a cytosolic protein complex that binds to dilysine motifs and reversibly associates with Golgi non-clathrin-coated vesicles, which further mediate biosynthetic protein transport from the ER, via the Golgi up to the trans Golgi network. Coatomer complex is required for budding from Golgi membranes, and is essential for the retrograde Golgi-to-ER transport of dilysine-tagged proteins. In Oryza sativa subsp. japonica (Rice), this protein is Coatomer subunit beta-2.